The primary structure comprises 373 residues: Dual-specificity RNA methyltransferase RlmN (373 aa).

The active-site Proton acceptor is the E94. Residues 100–339 (EADRATLCVS…VIVRKTRGDD (240 aa)) enclose the Radical SAM core domain. A disulfide bond links C107 and C344. 3 residues coordinate [4Fe-4S] cluster: C114, C118, and C121. S-adenosyl-L-methionine is bound by residues 168-169 (GE), S200, 222-224 (SLH), and N301. Residue C344 is the S-methylcysteine intermediate of the active site.

Belongs to the radical SAM superfamily. RlmN family. [4Fe-4S] cluster serves as cofactor.

The protein localises to the cytoplasm. The enzyme catalyses adenosine(2503) in 23S rRNA + 2 reduced [2Fe-2S]-[ferredoxin] + 2 S-adenosyl-L-methionine = 2-methyladenosine(2503) in 23S rRNA + 5'-deoxyadenosine + L-methionine + 2 oxidized [2Fe-2S]-[ferredoxin] + S-adenosyl-L-homocysteine. It catalyses the reaction adenosine(37) in tRNA + 2 reduced [2Fe-2S]-[ferredoxin] + 2 S-adenosyl-L-methionine = 2-methyladenosine(37) in tRNA + 5'-deoxyadenosine + L-methionine + 2 oxidized [2Fe-2S]-[ferredoxin] + S-adenosyl-L-homocysteine. Its function is as follows. Specifically methylates position 2 of adenine 2503 in 23S rRNA and position 2 of adenine 37 in tRNAs. m2A2503 modification seems to play a crucial role in the proofreading step occurring at the peptidyl transferase center and thus would serve to optimize ribosomal fidelity. The polypeptide is Dual-specificity RNA methyltransferase RlmN (Tolumonas auensis (strain DSM 9187 / NBRC 110442 / TA 4)).